A 145-amino-acid polypeptide reads, in one-letter code: Class I hydrophobin 1 (145 aa).

The first 19 residues, M1 to A19, serve as a signal peptide directing secretion. 4 disulfides stabilise this stretch: C65–C126, C72–C120, C73–C106, and C127–C140. 2 N-linked (GlcNAc...) asparagine glycosylation sites follow: N80 and N129.

Belongs to the fungal hydrophobin family. As to quaternary structure, self-assembles to form functional amyloid fibrils called rodlets. Self-assembly into fibrillar rodlets occurs spontaneously at hydrophobic:hydrophilic interfaces and the rodlets further associate laterally to form amphipathic monolayers.

It localises to the secreted. Its subcellular location is the cell wall. In terms of biological role, aerial growth, conidiation, and dispersal of filamentous fungi in the environment rely upon a capability of their secreting small amphipathic proteins called hydrophobins (HPBs) with low sequence identity. Class I can self-assemble into an outermost layer of rodlet bundles on aerial cell surfaces, conferring cellular hydrophobicity that supports fungal growth, development and dispersal; whereas Class II form highly ordered films at water-air interfaces through intermolecular interactions but contribute nothing to the rodlet structure. Hyd1 is a class I hydrophobin that is crucial for the initiation of primordia formation. Plays also important roles in nitrogen regulation and resistance to abiotic stresses. The polypeptide is Class I hydrophobin 1 (Ganoderma lucidum (Ling zhi medicinal fungus)).